The primary structure comprises 345 residues: NADH-quinone oxidoreductase subunit H (345 aa).

The next 8 membrane-spanning stretches (helical) occupy residues 13–33, 84–104, 115–135, 161–181, 190–210, 248–268, 277–297, and 309–329; these read VIIL…LLFL, FILA…VIPF, VAIL…IMGG, IGLI…GDIV, LFNW…ISCL, YIAI…GWLS, PLWM…VKAI, and LGWK…AFAA.

The protein belongs to the complex I subunit 1 family. NDH-1 is composed of 14 different subunits. Subunits NuoA, H, J, K, L, M, N constitute the membrane sector of the complex.

The protein localises to the cell inner membrane. It catalyses the reaction a quinone + NADH + 5 H(+)(in) = a quinol + NAD(+) + 4 H(+)(out). In terms of biological role, NDH-1 shuttles electrons from NADH, via FMN and iron-sulfur (Fe-S) centers, to quinones in the respiratory chain. The immediate electron acceptor for the enzyme in this species is believed to be ubiquinone. Couples the redox reaction to proton translocation (for every two electrons transferred, four hydrogen ions are translocated across the cytoplasmic membrane), and thus conserves the redox energy in a proton gradient. This subunit may bind ubiquinone. This is NADH-quinone oxidoreductase subunit H from Ruegeria sp. (strain TM1040) (Silicibacter sp.).